A 540-amino-acid chain; its full sequence is MRVNNGLTPQELEAYGISDVHDIVYNPSYDLLYQEELDPSLTGYERGVLTNLGAVAVDTGIFTGRSPKDKYIVRDDTTRDTFWWADKGKGKNDNKPLSPETWQHLKGLVTRQLSGKRLFVVDAFCGANPDTRLSVRFITEVAWQAHFVKNMFIRPSDEELAGFKPDFIVMNGAKCTNPQWKEQGLNSENFVAFNLTERMQLIGGTWYGGEMKKGMFSMMNYLLPLKGIASMHCSANVGEKGDVAVFFGLSGTGKTTLSTDPKRRLIGDDEHGWDDDGVFNFEGGCYAKTIKLSKEAEPEIYNAIRRDALLENVTVREDGTIDFDDGSKTENTRVSYPIYHIDNIVKPVSKAGHATKVIFLTADAFGVLPPVSRLTADQTQYHFLSGFTAKLAGTERGITEPTPTFSACFGAAFLSLHPTQYAEVLVKRMQAAGAQAYLVNTGWNGTGKRISIKDTRAIIDAILNGSLDNAETFTLPMFNLAIPTELPGVDTKILDPRNTYASPEQWQEKAETLAKLFIDNFDKYTDTPAGAALVAAGPKL.

Arg-65 is a binding site for substrate. Residue Lys-87 is modified to N6-acetyllysine. Residues Tyr-207 and Lys-213 each contribute to the substrate site. ATP-binding positions include Lys-213, His-232, and 248–256 (GLSGTGKTT). Mn(2+) contacts are provided by Lys-213 and His-232. Asp-269 serves as a coordination point for Mn(2+). ATP is bound by residues Glu-297, Arg-333, 449–450 (RI), and Thr-455. Substrate is bound at residue Arg-333. The residue at position 523 (Lys-523) is an N6-acetyllysine.

This sequence belongs to the phosphoenolpyruvate carboxykinase (ATP) family. In terms of assembly, monomer. It depends on Mn(2+) as a cofactor.

The protein resides in the cytoplasm. It catalyses the reaction oxaloacetate + ATP = phosphoenolpyruvate + ADP + CO2. It participates in carbohydrate biosynthesis; gluconeogenesis. In terms of biological role, involved in the gluconeogenesis. Catalyzes the conversion of oxaloacetate (OAA) to phosphoenolpyruvate (PEP) through direct phosphoryl transfer between the nucleoside triphosphate and OAA. The polypeptide is Phosphoenolpyruvate carboxykinase (ATP) (Escherichia coli O127:H6 (strain E2348/69 / EPEC)).